Consider the following 216-residue polypeptide: Probable inactive E3 ubiquitin-protein ligase SINAT6 (216 aa).

The SIAH-type zinc finger occupies 5-74; that stretch reads INDLQVESRV…LLLHLRNDHN (70 aa).

It belongs to the SINA (Seven in absentia) family. As to quaternary structure, homodimer. Interacts with SINAT1, SINAT2, SINAT3, SINAT4 and SINAT5. Interacts with ATG6 and TRAF1A. In terms of tissue distribution, expressed in roots, rosette leaves, cauline leaves, guard cells and flowers.

Its subcellular location is the cytoplasm. The protein localises to the nucleus. Its function is as follows. Probable inactive E3 ubiquitin-protein ligase that plays a role in regulation of autophagy. Upon starvation, involved in maintaining ATG6 homeostasis by competitively associating with ATG6, a component of the autophagosome complex. Acts as a positive regulator of drought stress response. Functions as a positive regulator of abscisic acid-mediated stomatal closure. This Arabidopsis thaliana (Mouse-ear cress) protein is Probable inactive E3 ubiquitin-protein ligase SINAT6.